Reading from the N-terminus, the 283-residue chain is Thymidylate synthase (283 aa).

DUMP is bound at residue R22. C160 functions as the Nucleophile in the catalytic mechanism. Residues 180 to 183 (RSCD), N191, and 221 to 223 (HIY) contribute to the dUMP site. A (6R)-5,10-methylene-5,6,7,8-tetrahydrofolate-binding site is contributed by D183. (6R)-5,10-methylene-5,6,7,8-tetrahydrofolate is bound at residue A282.

It belongs to the thymidylate synthase family. Bacterial-type ThyA subfamily. In terms of assembly, homodimer.

The protein resides in the cytoplasm. It carries out the reaction dUMP + (6R)-5,10-methylene-5,6,7,8-tetrahydrofolate = 7,8-dihydrofolate + dTMP. It participates in pyrimidine metabolism; dTTP biosynthesis. Functionally, catalyzes the reductive methylation of 2'-deoxyuridine-5'-monophosphate (dUMP) to 2'-deoxythymidine-5'-monophosphate (dTMP) while utilizing 5,10-methylenetetrahydrofolate (mTHF) as the methyl donor and reductant in the reaction, yielding dihydrofolate (DHF) as a by-product. This enzymatic reaction provides an intracellular de novo source of dTMP, an essential precursor for DNA biosynthesis. The polypeptide is Thymidylate synthase (Colwellia psychrerythraea (strain 34H / ATCC BAA-681) (Vibrio psychroerythus)).